Reading from the N-terminus, the 292-residue chain is Elongation factor Ts (292 aa).

The interval 80-83 (TDFV) is involved in Mg(2+) ion dislocation from EF-Tu.

It belongs to the EF-Ts family.

The protein localises to the cytoplasm. Its function is as follows. Associates with the EF-Tu.GDP complex and induces the exchange of GDP to GTP. It remains bound to the aminoacyl-tRNA.EF-Tu.GTP complex up to the GTP hydrolysis stage on the ribosome. The sequence is that of Elongation factor Ts from Ralstonia pickettii (strain 12J).